The primary structure comprises 370 residues: Mitochondrial distribution and morphology protein 10 (370 aa).

The protein belongs to the MDM10 family. In terms of assembly, component of the ER-mitochondria encounter structure (ERMES) or MDM complex, composed of mmm1, mdm10, mdm12 and mdm34. Associates with the mitochondrial outer membrane sorting assembly machinery SAM(core) complex.

The protein resides in the mitochondrion outer membrane. In terms of biological role, component of the ERMES/MDM complex, which serves as a molecular tether to connect the endoplasmic reticulum and mitochondria. Components of this complex are involved in the control of mitochondrial shape and protein biogenesis and may function in phospholipid exchange. mdm10 is involved in the late assembly steps of the general translocase of the mitochondrial outer membrane (TOM complex). Functions in the tom40-specific route of the assembly of outer membrane beta-barrel proteins, including the association of tom40 with the receptor tom22 and small TOM proteins. Can associate with the SAM(core) complex as well as the mdm12-mmm1 complex, both involved in late steps of the major beta-barrel assembly pathway, that is responsible for biogenesis of all outer membrane beta-barrel proteins. May act as a switch that shuttles between both complexes and channels precursor proteins into the tom40-specific pathway. Plays a role in mitochondrial morphology and in the inheritance of mitochondria. The polypeptide is Mitochondrial distribution and morphology protein 10 (mdm10) (Schizosaccharomyces pombe (strain 972 / ATCC 24843) (Fission yeast)).